The sequence spans 489 residues: Rhamnulokinase (489 aa).

ATP is bound at residue 13–17 (ASSGR). Cysteine 68 and cysteine 222 are oxidised to a cystine. Residues glycine 83 and 236–238 (HDT) each bind substrate. Aspartate 237 acts as the Proton acceptor in catalysis. Threonine 259 is a binding site for ATP. Residue asparagine 296 coordinates substrate. Glutamine 304 lines the ATP pocket. Cysteine 353 and cysteine 370 are joined by a disulfide. Glycine 402 lines the ATP pocket. A disulfide bond links cysteine 413 and cysteine 417.

This sequence belongs to the rhamnulokinase family. It depends on Mg(2+) as a cofactor.

The enzyme catalyses L-rhamnulose + ATP = L-rhamnulose 1-phosphate + ADP + H(+). It functions in the pathway carbohydrate degradation; L-rhamnose degradation; glycerone phosphate from L-rhamnose: step 2/3. In terms of biological role, involved in the catabolism of L-rhamnose (6-deoxy-L-mannose). Catalyzes the transfer of the gamma-phosphate group from ATP to the 1-hydroxyl group of L-rhamnulose to yield L-rhamnulose 1-phosphate. The chain is Rhamnulokinase from Salmonella dublin (strain CT_02021853).